A 112-amino-acid chain; its full sequence is Low molecular weight protein antigen 6 (112 aa).

Its subcellular location is the secreted. This is Low molecular weight protein antigen 6 (cfp6) from Mycobacterium bovis (strain ATCC BAA-935 / AF2122/97).